The following is a 503-amino-acid chain: Carboxyl-terminal PDZ ligand of neuronal nitric oxide synthase protein (503 aa).

The PID domain occupies 26–191 (FQHGISFEAK…ESERNSDGSG (166 aa)). The disordered stretch occupies residues 170–212 (HTQQNADGQEDGESERNSDGSGDPGRQLTGAERVSTAAAEETD). S183, S187, S190, and S262 each carry phosphoserine. The stretch at 318–359 (AAEAAARLEAQARVHQLLLQNKDMLQHISLLVKQVQELELKL) forms a coiled coil. S367, S370, S397, and S413 each carry phosphoserine. The tract at residues 491–503 (QELGDSLDDEIAV) is interaction with NOS1. Positions 501–503 (IAV) match the PDZ-binding motif.

Interacts with the PDZ domain of NOS1 or the second PDZ domain of DLG4 through its C-terminus. Interacts with RASD1 and SYN1, SYN2 and SYN3 via its PID domain. Forms a ternary complex with NOS1 and SYN1. Forms a ternary complex with NOS1 and RASD1.

The protein localises to the cell projection. It is found in the filopodium. Its subcellular location is the podosome. Adapter protein involved in neuronal nitric-oxide (NO) synthesis regulation via its association with nNOS/NOS1. The complex formed with NOS1 and synapsins is necessary for specific NO and synapsin functions at a presynaptic level. Mediates an indirect interaction between NOS1 and RASD1 leading to enhance the ability of NOS1 to activate RASD1. Competes with DLG4 for interaction with NOS1, possibly affecting NOS1 activity by regulating the interaction between NOS1 and DLG4. In kidney podocytes, plays a role in podosomes and filopodia formation through CDC42 activation. The chain is Carboxyl-terminal PDZ ligand of neuronal nitric oxide synthase protein from Mus musculus (Mouse).